A 39-amino-acid polypeptide reads, in one-letter code: MTIDRIYPIFTVRWLAIHGLAVPTVFFLGSISAMQFIQR.

Residues 14-30 (WLAIHGLAVPTVFFLGS) form a helical membrane-spanning segment. Position 18 (H18) interacts with heme.

The protein belongs to the PsbE/PsbF family. Heterodimer of an alpha subunit and a beta subunit. PSII is composed of 1 copy each of membrane proteins PsbA, PsbB, PsbC, PsbD, PsbE, PsbF, PsbH, PsbI, PsbJ, PsbK, PsbL, PsbM, PsbT, PsbX, PsbY, PsbZ, Psb30/Ycf12, at least 3 peripheral proteins of the oxygen-evolving complex and a large number of cofactors. It forms dimeric complexes. Requires heme b as cofactor.

The protein resides in the plastid. It is found in the chloroplast thylakoid membrane. In terms of biological role, this b-type cytochrome is tightly associated with the reaction center of photosystem II (PSII). PSII is a light-driven water:plastoquinone oxidoreductase that uses light energy to abstract electrons from H(2)O, generating O(2) and a proton gradient subsequently used for ATP formation. It consists of a core antenna complex that captures photons, and an electron transfer chain that converts photonic excitation into a charge separation. The sequence is that of Cytochrome b559 subunit beta from Ephedra sinica (Chinese ephedra).